The primary structure comprises 321 residues: Dolichyl N-acetyl-alpha-D-glucosaminyl phosphate 3-beta-D-2,3-diacetamido-2,3-dideoxy-beta-D-glucuronosyltransferase (321 aa).

2 helical membrane passes run 252-272 (FGFL…FIYI) and 290-310 (LYIA…YGFF).

The protein belongs to the glycosyltransferase 2 family.

The protein localises to the cell membrane. The enzyme catalyses an archaeal dolichyl N-acetyl-alpha-D-glucosaminyl phosphate + UDP-2,3-diacetamido-2,3-dideoxy-alpha-D-glucuronate = an archaeal dolichyl 3-O-(2,3-diacetamido-2,3-dideoxy- beta-D-glucuronosyl)-N-acetyl- alpha-D-glucosaminyl phosphate + UDP + H(+). The protein operates within cell surface structure biogenesis; S-layer biogenesis. It functions in the pathway protein modification; protein glycosylation. Functionally, involved in the assembly of an N-linked disaccharide that decorates the S-layer glycoprotein and flagellins. AglC catalyzes the transfer of 2,3-diacetamido-2,3-dideoxy-alpha-D-glucuronic acid (Glc-2,3-diNAcA) from uridine 5'-diphospho 2,3-diacetamido-2,3-dideoxy-alpha-D-glucuronic acid (UDP-Glc-2,3-diNAcA) to the AglK product Dol-P-GlcNAc to yield Dol-P-GlcNAc-Glc-2,3-diNAcA. AglC is specific for the monophosphate-linked Dol-P-GlcNAc. This Methanococcus voltae protein is Dolichyl N-acetyl-alpha-D-glucosaminyl phosphate 3-beta-D-2,3-diacetamido-2,3-dideoxy-beta-D-glucuronosyltransferase.